The primary structure comprises 307 residues: Methionyl-tRNA formyltransferase (307 aa).

Residue S108–P111 coordinates (6S)-5,6,7,8-tetrahydrofolate.

The protein belongs to the Fmt family.

The catalysed reaction is L-methionyl-tRNA(fMet) + (6R)-10-formyltetrahydrofolate = N-formyl-L-methionyl-tRNA(fMet) + (6S)-5,6,7,8-tetrahydrofolate + H(+). Functionally, attaches a formyl group to the free amino group of methionyl-tRNA(fMet). The formyl group appears to play a dual role in the initiator identity of N-formylmethionyl-tRNA by promoting its recognition by IF2 and preventing the misappropriation of this tRNA by the elongation apparatus. The protein is Methionyl-tRNA formyltransferase of Stenotrophomonas maltophilia (strain K279a).